Consider the following 176-residue polypeptide: MSRVGKSPIALQGAEVALSDERITVKGPLGSISQNANRLVKVVNDNGTLKFEPADESREANAMSGTMRALVANMVHGVTKGFERKLTLVGVGYRAQAQGDKLNLSLGFSHPVVHQMPEGVKAETPSQTEIVIKGIDKQKVGQVAAEVRGYRPPEPYKGKGVRYANEVVILKETKKK.

This sequence belongs to the universal ribosomal protein uL6 family. Part of the 50S ribosomal subunit.

Functionally, this protein binds to the 23S rRNA, and is important in its secondary structure. It is located near the subunit interface in the base of the L7/L12 stalk, and near the tRNA binding site of the peptidyltransferase center. The chain is Large ribosomal subunit protein uL6 from Paraburkholderia phymatum (strain DSM 17167 / CIP 108236 / LMG 21445 / STM815) (Burkholderia phymatum).